We begin with the raw amino-acid sequence, 877 residues long: Transcriptional corepressor SEUSS (877 aa).

Disordered stretches follow at residues 1–42 and 272–295; these read MVPS…VSPR and LKSM…PLRP. Over residues 272 to 292 the composition is skewed to low complexity; sequence LKSMPQQRPQLPQQFQQQNLP. The tract at residues 321-563 is dimerization; it reads PEDNNIEFWR…ETRTGPIESL (243 aa). Positions 330–344 match the Nuclear localization signal motif; the sequence is RKFVAEYFAPNAKKR. Disordered stretches follow at residues 560–599, 612–633, and 666–753; these read IESL…QQQQ, QQTV…LMQG, and GRHQ…NESS. Residues 582–618 are a coiled coil; it reads QQASDQLRQQQQQQQQQQQQQQQQQQQQQQQQTVSQN. Low complexity predominate over residues 590-599; sequence QQQQQQQQQQ. Polar residues predominate over residues 614-633; the sequence is TVSQNTNSDQSSRQVALMQG. Composition is skewed to low complexity over residues 688–703 and 711–725; these read QSPS…SSQQ and QSPT…PSQN. The span at 726–741 shows a compositional bias: polar residues; that stretch reads GIPSVNHMGSTNSPAM.

Belongs to the adn1/SEU family. As to quaternary structure, forms a corepressor complex with LUG; LUG is the transcription repressor subunit and SEU the specific DNA-binding adapter. Interacts with AGL24-AP1 and SVP-AP1 dimers when complexed to SEU. Interacts with AP1/AGL7 and SEP3/AGL9. Binds to LUH. In terms of tissue distribution, expressed in root, leaves, seedlings, vegetative and reproductive shoot apical meristems, seeds, floral meristems and all floral organs.

It localises to the nucleus. Its subcellular location is the nucleoplasm. In terms of biological role, DNA-binding adapter subunit of the SEU-LUG transcriptional corepressor of the C class floral homeotic gene AGAMOUS during the early stages of floral meristem development. Is part of the A class cadastral complex that define the boundaries between the A and C class homeotic genes expression and function. Interacts together with APETALA2 and LEUNIG to repress AGAMOUS expression. In association with LUG, regulates petal shape through AGAMOUS-independent mechanisms. Controls cell division during petal development and enable the proper patterning of petal blade vasculature. Required for the proper elaboration of petal polarity along the adaxial/abaxial axis. May act through direct or indirect regulation of PHABULOSA and YAB1 and thus regulate cellular proliferation within the developing petal blade. In association with AINTEGUMENTA (ANT), coordinates patterning cues and cellular proliferation along the three positional axes of the developing gynoecium. Required for the development of the medial ridge and subsequent ovule initiation. The protein is Transcriptional corepressor SEUSS (SEU) of Arabidopsis thaliana (Mouse-ear cress).